The primary structure comprises 400 residues: Argininosuccinate synthase (400 aa).

Residue Ala-8–Ser-16 coordinates ATP. Residues Tyr-87 and Ser-92 each contribute to the L-citrulline site. Gly-117 lines the ATP pocket. L-aspartate is bound by residues Thr-119, Asn-123, and Asp-124. L-citrulline is bound at residue Asn-123. 4 residues coordinate L-citrulline: Arg-127, Ser-175, Glu-259, and Tyr-271.

The protein belongs to the argininosuccinate synthase family. Type 1 subfamily. In terms of assembly, homotetramer.

Its subcellular location is the cytoplasm. The catalysed reaction is L-citrulline + L-aspartate + ATP = 2-(N(omega)-L-arginino)succinate + AMP + diphosphate + H(+). Its pathway is amino-acid biosynthesis; L-arginine biosynthesis; L-arginine from L-ornithine and carbamoyl phosphate: step 2/3. The sequence is that of Argininosuccinate synthase from Frankia casuarinae (strain DSM 45818 / CECT 9043 / HFP020203 / CcI3).